Consider the following 944-residue polypeptide: Leucine--tRNA ligase (944 aa).

Residues 40–51 (PYPSGAGLHVGH) carry the 'HIGH' region motif. A 'KMSKS' region motif is present at residues 718 to 722 (KMSKS). Lys721 serves as a coordination point for ATP.

It belongs to the class-I aminoacyl-tRNA synthetase family.

It is found in the cytoplasm. The enzyme catalyses tRNA(Leu) + L-leucine + ATP = L-leucyl-tRNA(Leu) + AMP + diphosphate. This is Leucine--tRNA ligase from Phocaeicola vulgatus (strain ATCC 8482 / DSM 1447 / JCM 5826 / CCUG 4940 / NBRC 14291 / NCTC 11154) (Bacteroides vulgatus).